A 169-amino-acid chain; its full sequence is Cuticle protein 21 (169 aa).

6 consecutive repeat copies span residues 21–24 (AAPV), 27–30 (AAPA), 33–36 (AAPV), 39–42 (AAPA), 47–50 (AAPV), and 53–56 (AAPA). Residues 65–135 (NPQYSYAYNV…KEAGAHPAPV (71 aa)) enclose the Chitin-binding type R&amp;R domain. 3 tandem repeats follow at residues 140–143 (AAPV), 146–149 (AAPA), and 160–163 (AAPA).

In terms of biological role, component of the cuticle of migratory locust which contains more than 100 different structural proteins. The polypeptide is Cuticle protein 21 (ACP21) (Locusta migratoria (Migratory locust)).